The sequence spans 242 residues: Enolase-phosphatase E1 (242 aa).

This sequence belongs to the HAD-like hydrolase superfamily. MasA/MtnC family. Monomer. Requires Mg(2+) as cofactor.

It catalyses the reaction 5-methylsulfanyl-2,3-dioxopentyl phosphate + H2O = 1,2-dihydroxy-5-(methylsulfanyl)pent-1-en-3-one + phosphate. It participates in amino-acid biosynthesis; L-methionine biosynthesis via salvage pathway; L-methionine from S-methyl-5-thio-alpha-D-ribose 1-phosphate: step 3/6. Its pathway is amino-acid biosynthesis; L-methionine biosynthesis via salvage pathway; L-methionine from S-methyl-5-thio-alpha-D-ribose 1-phosphate: step 4/6. Functionally, bifunctional enzyme that catalyzes the enolization of 2,3-diketo-5-methylthiopentyl-1-phosphate (DK-MTP-1-P) into the intermediate 2-hydroxy-3-keto-5-methylthiopentenyl-1-phosphate (HK-MTPenyl-1-P), which is then dephosphorylated to form the acireductone 1,2-dihydroxy-3-keto-5-methylthiopentene (DHK-MTPene). The sequence is that of Enolase-phosphatase E1 from Synechococcus sp. (strain WH7803).